We begin with the raw amino-acid sequence, 497 residues long: 4,4'-diapolycopene oxygenase (497 aa).

Belongs to the carotenoid/retinoid oxidoreductase family. FAD serves as cofactor.

It catalyses the reaction all-trans-4,4'-diapolycopene + 4 AH2 + 4 O2 = all-trans-4,4'-diapolycopene-4,4'-dial + 4 A + 6 H2O. The catalysed reaction is all-trans-4,4'-diaponeurosporene + 2 AH2 + 2 O2 = 4,4'-diaponeurosporenal + 2 A + 3 H2O. It participates in carotenoid biosynthesis. Its function is as follows. Involved in the biosynthesis of C30 carotenoids. Catalyzes the oxidation of the terminal methyl side groups of 4,4'-diapolycopene to yield 4,4'-diapolycopen-4,4'-dial via the aldehyde intermediate 4,4'-diapolycopen-al. Also able to catalyze the oxidation of the terminal methyl side group of 4,4'-diaponeurosporene to form 4,4'-diaponeurosporen-4-al. It has moderate to low activity on the C40 substrates neurosporene and lycopene, and has no detectable activity on zeta-carotene or beta-carotene. This is 4,4'-diapolycopene oxygenase from Methylomonas sp.